A 164-amino-acid chain; its full sequence is NADH-quinone oxidoreductase subunit I (164 aa).

2 consecutive 4Fe-4S ferredoxin-type domains span residues 55-85 and 95-124; these read LRRY…IDAE and TRYD…EGPN. 8 residues coordinate [4Fe-4S] cluster: Cys-65, Cys-68, Cys-71, Cys-75, Cys-104, Cys-107, Cys-110, and Cys-114.

This sequence belongs to the complex I 23 kDa subunit family. In terms of assembly, NDH-1 is composed of 14 different subunits. Subunits NuoA, H, J, K, L, M, N constitute the membrane sector of the complex. [4Fe-4S] cluster is required as a cofactor.

The protein localises to the cell inner membrane. The enzyme catalyses a quinone + NADH + 5 H(+)(in) = a quinol + NAD(+) + 4 H(+)(out). Its function is as follows. NDH-1 shuttles electrons from NADH, via FMN and iron-sulfur (Fe-S) centers, to quinones in the respiratory chain. The immediate electron acceptor for the enzyme in this species is believed to be ubiquinone. Couples the redox reaction to proton translocation (for every two electrons transferred, four hydrogen ions are translocated across the cytoplasmic membrane), and thus conserves the redox energy in a proton gradient. The sequence is that of NADH-quinone oxidoreductase subunit I from Jannaschia sp. (strain CCS1).